The sequence spans 673 residues: Poly(glycerol-phosphate) alpha-glucosyltransferase (673 aa).

Ser2 is modified (phosphoserine).

This sequence belongs to the glycosyltransferase group 1 family. Glycosyltransferase 4 subfamily.

The protein localises to the cytoplasm. It carries out the reaction 4-O-{[(2R)-1-glycerylphospho](n)-(2R)-1-glycerylphospho}-N-acetyl-beta-D-mannosaminyl-(1-&gt;4)-N-acetyl-alpha-D-glucosaminyl undecaprenyl diphosphate + n UDP-alpha-D-glucose = 4-O-{[(2R)-2-alpha-D-glucosyl-1-glycerylphospho](n)-(2R)-1-glycerylphospho}-N-acetyl-beta-D-mannosaminyl-(1-&gt;4)-N-acetyl-alpha-D-glucosaminyl undecaprenyl diphosphate + n UDP + n H(+). It participates in cell wall biogenesis; poly(glycerol phosphate) teichoic acid biosynthesis. In terms of biological role, catalyzes the addition of glucose to the C-2 hydroxy group of the glycerol units in teichoic acid. The polypeptide is Poly(glycerol-phosphate) alpha-glucosyltransferase (tagE) (Bacillus subtilis (strain 168)).